Consider the following 87-residue polypeptide: Acyl-CoA-binding protein (87 aa).

An N-acetylserine modification is found at serine 2. Residues 2 to 87 enclose the ACB domain; it reads SQAEFEKAAE…VEELKQKYGI (86 aa). The residue at position 8 (lysine 8) is an N6-acetyllysine; alternate. N6-succinyllysine; alternate is present on lysine 8. Lysine 14 is an an acyl-CoA binding site. Lysine 17 is subject to N6-succinyllysine. The residue at position 19 (lysine 19) is an N6-acetyllysine. Tyrosine 29 is modified (phosphotyrosine). Residues 29 to 33, lysine 51, lysine 55, and tyrosine 74 contribute to the an acyl-CoA site; that span reads YSHYK. Residue lysine 51 is modified to N6-acetyllysine. Residue lysine 55 is modified to N6-acetyllysine; alternate. Lysine 55 is modified (N6-succinyllysine; alternate). Lysine 55 is subject to N6-(2-hydroxyisobutyryl)lysine; alternate. Lysine 55 bears the N6-malonyllysine; alternate mark. Position 77 is an N6-acetyllysine; alternate (lysine 77). N6-succinyllysine; alternate is present on lysine 77.

This sequence belongs to the ACBP family. As to quaternary structure, monomer.

It localises to the endoplasmic reticulum. It is found in the golgi apparatus. Binds medium- and long-chain acyl-CoA esters with very high affinity and may function as an intracellular carrier of acyl-CoA esters. It is also able to displace diazepam from the benzodiazepine (BZD) recognition site located on the GABA type A receptor. It is therefore possible that this protein also acts as a neuropeptide to modulate the action of the GABA receptor. The protein is Acyl-CoA-binding protein (DBI) of Oryctolagus cuniculus (Rabbit).